The chain runs to 1813 residues: Latent-transforming growth factor beta-binding protein 2 (1813 aa).

A signal peptide spans 1-35; that stretch reads MRAPTTARCSGCIQRVRWRGFLPLVLAVLMGTSHA. Positions 94–115 are heparin-binding; it reads NPGWLAEAEARRPPRTQQLRRV. The segment at 103-152 is disordered; the sequence is ARRPPRTQQLRRVQPPVQTRRSHPRGQQQIAARAAPSVARLETPQRPAAA. The segment covering 108–132 has biased composition (polar residues); that stretch reads RTQQLRRVQPPVQTRRSHPRGQQQI. N-linked (GlcNAc...) asparagine glycosylation occurs at Asn175. An EGF-like 1 domain is found at 181–213; it reads IKPVCQPPCQNRGSCSRPQVCICRSGFRGARCE. Disulfide bonds link Cys185–Cys195, Cys189–Cys201, and Cys203–Cys212. The interval 220–305 is disordered; that stretch reads EFDPQNARPV…QLMSNALPSG (86 aa). The tract at residues 226–243 is heparin-binding; that stretch reads ARPVPRRSVERAPGPHRS. A compositionally biased stretch (pro residues) spans 257–266; sequence LVPPPSPPPS. Positions 293-302 are enriched in polar residues; that stretch reads ANGQLMSNAL. The N-linked (GlcNAc...) asparagine glycan is linked to Asn328. Heparin is bound at residue 329–339; the sequence is LTEKIKKIKVV. The EGF-like 2 domain occupies 381–413; the sequence is RIYFCQIPCLNGGRCIGRDECWCPANSTGKFCH. 3 disulfides stabilise this stretch: Cys385/Cys395, Cys389/Cys401, and Cys403/Cys412. The N-linked (GlcNAc...) asparagine glycan is linked to Asn406. Position 491 is a phosphoserine (Ser491). The interval 492 to 524 is disordered; that stretch reads VETRASHRPHGNLGHSPWASNSIPARAGEAPRP. The 53-residue stretch at 536–588 folds into the TB 1 domain; sequence GQCYLSTVNGQCANPLGSLTSQEDCCGSVGTFWGVTSCAPCPPRQEGPAFPVI. 3 disulfides stabilise this stretch: Cys538/Cys560, Cys547/Cys573, and Cys561/Cys576. A glycan (N-linked (GlcNAc...) asparagine) is linked at Asn603. The EGF-like 3; calcium-binding domain occupies 609-649; that stretch reads DINECLTLGLCKDSECVNTRGSYLCTCRPGLMLDPSRSRCV. 7 disulfide bridges follow: Cys613/Cys624, Cys619/Cys633, Cys635/Cys648, Cys661/Cys683, Cys670/Cys696, Cys684/Cys699, and Cys685/Cys711. The region spanning 659-711 is the TB 2 domain; the sequence is GLCYRSLGSGTCTLPLVHRITKQICCCSRVGKAWGSTCEQCPLPGTEAFREIC. Disordered regions lie at residues 730 to 761 and 787 to 819; these read KAEE…QPLR and SAPH…PAEE. Positions 835-877 constitute an EGF-like 4 domain; it reads DFDPCFAGASNICGPGTCVSLPNGYRCVCSPGYQLHPSQDYCT. 49 disulfide bridges follow: Cys839–Cys852, Cys847–Cys861, Cys863–Cys876, Cys882–Cys893, Cys887–Cys902, Cys904–Cys919, Cys925–Cys936, Cys931–Cys945, Cys947–Cys959, Cys965–Cys976, Cys971–Cys985, Cys988–Cys999, Cys1005–Cys1016, Cys1011–Cys1025, Cys1027–Cys1040, Cys1046–Cys1057, Cys1052–Cys1066, Cys1069–Cys1082, Cys1088–Cys1099, Cys1094–Cys1108, Cys1111–Cys1124, Cys1130–Cys1142, Cys1137–Cys1151, Cys1153–Cys1165, Cys1171–Cys1183, Cys1177–Cys1192, Cys1194–Cys1207, Cys1213–Cys1224, Cys1219–Cys1233, Cys1235–Cys1249, Cys1255–Cys1268, Cys1263–Cys1277, Cys1281–Cys1293, Cys1299–Cys1311, Cys1305–Cys1320, Cys1322–Cys1335, Cys1341–Cys1353, Cys1348–Cys1362, Cys1364–Cys1378, Cys1405–Cys1428, Cys1415–Cys1440, Cys1429–Cys1443, Cys1430–Cys1455, Cys1481–Cys1494, Cys1489–Cys1503, Cys1505–Cys1518, Cys1524–Cys1534, Cys1529–Cys1543, and Cys1545–Cys1558. The region spanning 878 to 920 is the EGF-like 5; calcium-binding domain; that stretch reads DDNECMRNPCEGRGRCVNSVGSYSCLCYPGYTLVTLGDTQECQ. The region spanning 921-960 is the EGF-like 6; calcium-binding domain; the sequence is DIDECEQPGVCSGGRCSNTEGSYHCECDRGYIMVRKGHCQ. Positions 961-1000 constitute an EGF-like 7; calcium-binding domain; sequence DINECRHPGTCPDGRCVNSPGSYTCLACEEGYVGQSGSCV. The 41-residue stretch at 1001–1041 folds into the EGF-like 8; calcium-binding domain; sequence DVNECLTPGICTHGRCINMEGSFRCSCEPGYEVTPDKKGCR. One can recognise an EGF-like 9; calcium-binding domain in the interval 1042-1083; sequence DVDECASRASCPTGLCLNTEGSFTCSACQSGYWVNEDGTACE. In terms of domain architecture, EGF-like 10; calcium-binding spans 1084 to 1125; sequence DLDECAFPGVCPTGVCTNTVGSFSCKDCDQGYRPNPLGNRCE. The 41-residue stretch at 1126-1166 folds into the EGF-like 11; calcium-binding domain; the sequence is DVDECEGPQSSCRGGECKNTEGSYQCLCHQGFQLVNGTMCE. Residue Asn1161 is glycosylated (N-linked (GlcNAc...) asparagine). Residues 1167–1208 form the EGF-like 12; calcium-binding domain; the sequence is DVNECVGEEHCAPHGECLNSLGSFFCLCAPGFASAEGGTRCQ. Residues 1209 to 1250 enclose the EGF-like 13; calcium-binding domain; that stretch reads DVDECAATDPCPGGHCVNTEGSFSCLCETASFQPSPDSGECL. The EGF-like 14; calcium-binding domain occupies 1251-1294; that stretch reads DIDECEDREDPVCGAWRCENSPGSYRCILDCQPGFYVAPNGDCI. The 42-residue stretch at 1295 to 1336 folds into the EGF-like 15; calcium-binding domain; the sequence is DIDECANDTVCGNHGFCDNTDGSFRCLCDQGFETSPSGWECV. Asn1301 carries an N-linked (GlcNAc...) asparagine glycan. One can recognise an EGF-like 16; calcium-binding domain in the interval 1337–1379; it reads DVNECELMMAVCGDALCENVEGSFLCLCASDLEEYDAEEGHCR. The region spanning 1403–1455 is the TB 3 domain; it reads MECYSEHNGGPPCSQILGQNSTQAECCCTQGARWGKACAPCPSEDSVEFSQLC. Residue Asn1422 is glycosylated (N-linked (GlcNAc...) asparagine). In terms of domain architecture, EGF-like 17; calcium-binding spans 1477–1519; that stretch reads DADECVLFGPALCQNGRCSNIVPGYICLCNPGYHYDASSRKCQ. One can recognise an EGF-like 18; calcium-binding domain in the interval 1520-1559; it reads DHNECQDLACENGECVNQEGSFHCLCNPPLTLDLSGQRCV. Residue Asn1560 is glycosylated (N-linked (GlcNAc...) asparagine). The region spanning 1576–1628 is the TB 4 domain; sequence DICWKKVTNDVCSQPLRGHHTTYTECCCQDGEAWSQQCALCPPRSSEVYAQLC. 4 disulfide bridges follow: Cys1578–Cys1601, Cys1587–Cys1613, Cys1602–Cys1616, and Cys1603–Cys1628. The interval 1631–1813 is C-terminal domain; it reads ARIEAERGAG…PGPPHCAAKE (183 aa). The segment at 1671-1717 is disordered; that stretch reads YLGPEDTAPEPPFSNPASQPGDNTPVLEPPLQPSELQPHYLASHSEP. The EGF-like 19; calcium-binding domain occupies 1725-1765; the sequence is QAEECGILNGCENGRCVRVREGYTCDCFEGFQLDAPTLACV. 6 cysteine pairs are disulfide-bonded: Cys1729-Cys1740, Cys1735-Cys1749, Cys1751-Cys1764, Cys1770-Cys1785, Cys1780-Cys1794, and Cys1796-Cys1809. The 45-residue stretch at 1766 to 1810 folds into the EGF-like 20; calcium-binding domain; sequence DVNECEDLNGPARLCAHGHCENTEGSYRCHCSPGYVAEPGPPHCA.

Belongs to the LTBP family. Forms part of the large latent transforming growth factor beta precursor complex; removal is essential for activation of complex. Interacts with SDC4. Interacts (via C-terminal domain) with FBN1 (via N-terminal domain) in a Ca(+2)-dependent manner. Post-translationally, N-Glycosylated. Contains hydroxylated asparagine residues. In terms of tissue distribution, expressed in the anterior chamber of the eye.

Its subcellular location is the secreted. The protein resides in the extracellular space. The protein localises to the extracellular matrix. Its function is as follows. May play an integral structural role in elastic-fiber architectural organization and/or assembly. The chain is Latent-transforming growth factor beta-binding protein 2 (Ltbp2) from Mus musculus (Mouse).